The following is a 296-amino-acid chain: Probable endonuclease 4 (296 aa).

Zn(2+)-binding residues include His-68, His-109, Glu-144, Asp-178, His-181, His-213, Asp-226, His-228, and Glu-258.

It belongs to the AP endonuclease 2 family. Requires Zn(2+) as cofactor.

The enzyme catalyses Endonucleolytic cleavage to 5'-phosphooligonucleotide end-products.. Its function is as follows. Endonuclease IV plays a role in DNA repair. It cleaves phosphodiester bonds at apurinic or apyrimidinic (AP) sites, generating a 3'-hydroxyl group and a 5'-terminal sugar phosphate. The protein is Probable endonuclease 4 of Staphylococcus epidermidis (strain ATCC 35984 / DSM 28319 / BCRC 17069 / CCUG 31568 / BM 3577 / RP62A).